We begin with the raw amino-acid sequence, 861 residues long: Probable linoleate 9S-lipoxygenase 7 (861 aa).

Residues 29-160 (NVLDFTDLAG…NYKSDRIFFA (132 aa)) form the PLAT domain. One can recognise a Lipoxygenase domain in the interval 163-861 (PYLPSETPEL…GKGIPNSVSI (699 aa)). The segment at 220–246 (TLGGSAEYPYPRRGRTGRPPTRTDPKS) is disordered. Positions 522, 527, 713, 717, and 861 each coordinate Fe cation.

The protein belongs to the lipoxygenase family. In terms of assembly, monomer. Fe cation serves as cofactor. Expressed in tubers. Detected in sprouts and flowers. but not in leaves or stems.

It localises to the cytoplasm. The catalysed reaction is (9Z,12Z)-octadecadienoate + O2 = (9S)-hydroperoxy-(10E,12Z)-octadecadienoate. Its pathway is lipid metabolism; oxylipin biosynthesis. Its function is as follows. Plant lipoxygenases may be involved in a number of diverse aspects of plant physiology including growth and development, pest resistance, and senescence or responses to wounding. Catalyzes the hydroperoxidation of lipids containing a cis,cis-1,4-pentadiene structure. The sequence is that of Probable linoleate 9S-lipoxygenase 7 (LOX1.7) from Solanum tuberosum (Potato).